A 570-amino-acid chain; its full sequence is Formate--tetrahydrofolate ligase (570 aa).

Position 65 to 72 (65 to 72 (TPFGEGKT)) interacts with ATP.

This sequence belongs to the formate--tetrahydrofolate ligase family.

The enzyme catalyses (6S)-5,6,7,8-tetrahydrofolate + formate + ATP = (6R)-10-formyltetrahydrofolate + ADP + phosphate. It functions in the pathway one-carbon metabolism; tetrahydrofolate interconversion. The sequence is that of Formate--tetrahydrofolate ligase from Shewanella halifaxensis (strain HAW-EB4).